The primary structure comprises 505 residues: ATP synthase subunit beta (505 aa).

Residue 157–164 (GGAGVGKT) participates in ATP binding.

This sequence belongs to the ATPase alpha/beta chains family. As to quaternary structure, F-type ATPases have 2 components, CF(1) - the catalytic core - and CF(0) - the membrane proton channel. CF(1) has five subunits: alpha(3), beta(3), gamma(1), delta(1), epsilon(1). CF(0) has three main subunits: a(1), b(2) and c(9-12). The alpha and beta chains form an alternating ring which encloses part of the gamma chain. CF(1) is attached to CF(0) by a central stalk formed by the gamma and epsilon chains, while a peripheral stalk is formed by the delta and b chains.

Its subcellular location is the cell inner membrane. The catalysed reaction is ATP + H2O + 4 H(+)(in) = ADP + phosphate + 5 H(+)(out). Functionally, produces ATP from ADP in the presence of a proton gradient across the membrane. The catalytic sites are hosted primarily by the beta subunits. This Bacteroides thetaiotaomicron (strain ATCC 29148 / DSM 2079 / JCM 5827 / CCUG 10774 / NCTC 10582 / VPI-5482 / E50) protein is ATP synthase subunit beta.